The following is a 192-amino-acid chain: Density-regulated protein homolog (192 aa).

A disordered region spans residues Gly62 to Pro116. Residues Lys87–Gly99 are compositionally biased toward low complexity. Residues Arg117–Trp176 form the SUI1 domain.

It belongs to the DENR family.

The protein is Density-regulated protein homolog of Caenorhabditis elegans.